A 1046-amino-acid polypeptide reads, in one-letter code: Phospholipase D zeta 2 (1046 aa).

Residues 45-205 (PKAAIVSVSR…KEVCKFLEVS (161 aa)) form the PX domain. The 129-residue stretch at 215 to 343 (SKMKEGYVTV…WVKAVDEAGC (129 aa)) folds into the PH domain. The region spanning 472–499 (YLWSHHEKIVIVDYQVCFIGGLDLCFGR) is the PLD phosphodiesterase 1 domain. Catalysis depends on residues His-477, Lys-479, and Asp-484. Positions 653–667 (GRGDLKLDSGARQDP) are enriched in basic and acidic residues. The tract at residues 653–677 (GRGDLKLDSGARQDPGETSEESDLD) is disordered. A PLD phosphodiesterase 2 domain is found at 847–874 (SQIYVHSKLMIVDDRIAVIGSSNINDRS). Catalysis depends on residues His-852, Lys-854, and Asp-859.

It belongs to the phospholipase D family. PXPH-PLD subfamily. Does not require Ca(2+) or any other cation for activity. is required as a cofactor. Expressed in seedlings, roots, leaves, stems and flowers. Highest expression in roots. Detected only in the meristematic regions up to 4 days after germination and then at later stages in all tissues.

It carries out the reaction a 1,2-diacyl-sn-glycero-3-phosphocholine + H2O = a 1,2-diacyl-sn-glycero-3-phosphate + choline + H(+). Functionally, hydrolyzes glycerol-phospholipids at the terminal phosphodiesteric bond to generate phosphatidic acids (PA). Phosphatidylcholine-selective. Regulates vesicle trafficking and auxin responses. Required for the normal cycling of PIN-2 containing vesicles. Contributes to the supply of inorganic phosphorus for cell metabolism and diacylglycerol moieties for galactolipid synthesis in phosphorus-starved roots. Involved in root elongation during phosphate limitation. This chain is Phospholipase D zeta 2, found in Arabidopsis thaliana (Mouse-ear cress).